A 125-amino-acid polypeptide reads, in one-letter code: Small ribosomal subunit protein mS41 (125 aa).

The N-terminal 10 residues, 1–10 (MLSIFGCVRA), are a transit peptide targeting the mitochondrion. A disordered region spans residues 103 to 125 (SFFGGERNRKATVAKWRAEQRNK).

This sequence belongs to the mitochondrion-specific ribosomal protein mS41 family.

The protein resides in the mitochondrion. Involved in telomere length regulation. The chain is Small ribosomal subunit protein mS41 (FYV4) from Candida glabrata (strain ATCC 2001 / BCRC 20586 / JCM 3761 / NBRC 0622 / NRRL Y-65 / CBS 138) (Yeast).